A 214-amino-acid chain; its full sequence is Cytochrome b (214 aa).

The next 4 helical transmembrane spans lie at F31–I51, W75–I96, W111–L131, and F176–I196. Heme b-binding residues include H81 and H95. Residues H180 and H194 each contribute to the heme b site. An a ubiquinone-binding site is contributed by H199.

Belongs to the cytochrome b family. In terms of assembly, the cytochrome bc1 complex contains 3 respiratory subunits (MT-CYB, CYC1 and UQCRFS1), 2 core proteins (UQCRC1 and UQCRC2) and probably 6 low-molecular weight proteins. It depends on heme b as a cofactor.

It localises to the mitochondrion inner membrane. Its function is as follows. Component of the ubiquinol-cytochrome c reductase complex (complex III or cytochrome b-c1 complex) that is part of the mitochondrial respiratory chain. The b-c1 complex mediates electron transfer from ubiquinol to cytochrome c. Contributes to the generation of a proton gradient across the mitochondrial membrane that is then used for ATP synthesis. This chain is Cytochrome b (MT-CYB), found in Cerastes cerastes (Horned desert viper).